We begin with the raw amino-acid sequence, 383 residues long: N-acetyldiaminopimelate deacetylase (383 aa).

Asp72 is an active-site residue. The active-site Proton acceptor is Glu131.

The protein belongs to the peptidase M20A family. N-acetyldiaminopimelate deacetylase subfamily.

It carries out the reaction N-acetyl-(2S,6S)-2,6-diaminopimelate + H2O = (2S,6S)-2,6-diaminopimelate + acetate. It functions in the pathway amino-acid biosynthesis; L-lysine biosynthesis via DAP pathway; LL-2,6-diaminopimelate from (S)-tetrahydrodipicolinate (acetylase route): step 3/3. In terms of biological role, catalyzes the conversion of N-acetyl-diaminopimelate to diaminopimelate and acetate. The polypeptide is N-acetyldiaminopimelate deacetylase (Lacticaseibacillus paracasei (strain ATCC 334 / BCRC 17002 / CCUG 31169 / CIP 107868 / KCTC 3260 / NRRL B-441) (Lactobacillus paracasei)).